The chain runs to 342 residues: UDP-N-acetylenolpyruvoylglucosamine reductase (342 aa).

Residues 17-192 form the FAD-binding PCMH-type domain; the sequence is RFEAAARYAA…AEVTFALPVD (176 aa). Arg168 is an active-site residue. The Proton donor role is filled by Ser242. The active site involves Glu338.

It belongs to the MurB family. FAD is required as a cofactor.

The protein localises to the cytoplasm. The catalysed reaction is UDP-N-acetyl-alpha-D-muramate + NADP(+) = UDP-N-acetyl-3-O-(1-carboxyvinyl)-alpha-D-glucosamine + NADPH + H(+). The protein operates within cell wall biogenesis; peptidoglycan biosynthesis. Its function is as follows. Cell wall formation. This Ralstonia nicotianae (strain ATCC BAA-1114 / GMI1000) (Ralstonia solanacearum) protein is UDP-N-acetylenolpyruvoylglucosamine reductase.